The sequence spans 396 residues: Tryptophan synthase beta chain (396 aa).

Lysine 86 is subject to N6-(pyridoxal phosphate)lysine.

This sequence belongs to the TrpB family. As to quaternary structure, tetramer of two alpha and two beta chains. Pyridoxal 5'-phosphate is required as a cofactor.

The catalysed reaction is (1S,2R)-1-C-(indol-3-yl)glycerol 3-phosphate + L-serine = D-glyceraldehyde 3-phosphate + L-tryptophan + H2O. The protein operates within amino-acid biosynthesis; L-tryptophan biosynthesis; L-tryptophan from chorismate: step 5/5. In terms of biological role, the beta subunit is responsible for the synthesis of L-tryptophan from indole and L-serine. The protein is Tryptophan synthase beta chain of Erwinia tasmaniensis (strain DSM 17950 / CFBP 7177 / CIP 109463 / NCPPB 4357 / Et1/99).